The following is a 92-amino-acid chain: Secreted RxLR effector protein RXLR-C02 (92 aa).

A signal peptide spans 1–21; sequence MQFHLLVMTTIAASFAATGSA. The short motif at 48 to 51 is the RxLR element; that stretch reads RALR. Residues 54–75 form a disordered region; it reads ENRGLIGDDSDSSISDSDSEAK.

Belongs to the RxLR effector family.

The protein resides in the secreted. It localises to the host cytoplasm. It is found in the host nucleus. Secreted effector that suppresses pattern-triggered immunity (PTI) in plant host. The chain is Secreted RxLR effector protein RXLR-C02 from Plasmopara halstedii (Downy mildew of sunflower).